A 628-amino-acid chain; its full sequence is Biosynthetic arginine decarboxylase (628 aa).

Residue Lys101 is modified to N6-(pyridoxal phosphate)lysine. Position 281–291 (281–291) interacts with substrate; that stretch reads VDVGGGLGVDY.

The protein belongs to the Orn/Lys/Arg decarboxylase class-II family. SpeA subfamily. Requires Mg(2+) as cofactor. Pyridoxal 5'-phosphate serves as cofactor.

The enzyme catalyses L-arginine + H(+) = agmatine + CO2. The protein operates within amine and polyamine biosynthesis; agmatine biosynthesis; agmatine from L-arginine: step 1/1. Its function is as follows. Catalyzes the biosynthesis of agmatine from arginine. In Alkalilimnicola ehrlichii (strain ATCC BAA-1101 / DSM 17681 / MLHE-1), this protein is Biosynthetic arginine decarboxylase.